The sequence spans 414 residues: Serine hydroxymethyltransferase (414 aa).

(6S)-5,6,7,8-tetrahydrofolate contacts are provided by residues Leu121 and 125-127 (GHL). At Lys229 the chain carries N6-(pyridoxal phosphate)lysine.

Belongs to the SHMT family. In terms of assembly, homodimer. Pyridoxal 5'-phosphate is required as a cofactor.

Its subcellular location is the cytoplasm. It carries out the reaction (6R)-5,10-methylene-5,6,7,8-tetrahydrofolate + glycine + H2O = (6S)-5,6,7,8-tetrahydrofolate + L-serine. The protein operates within one-carbon metabolism; tetrahydrofolate interconversion. It participates in amino-acid biosynthesis; glycine biosynthesis; glycine from L-serine: step 1/1. Functionally, catalyzes the reversible interconversion of serine and glycine with tetrahydrofolate (THF) serving as the one-carbon carrier. This reaction serves as the major source of one-carbon groups required for the biosynthesis of purines, thymidylate, methionine, and other important biomolecules. Also exhibits THF-independent aldolase activity toward beta-hydroxyamino acids, producing glycine and aldehydes, via a retro-aldol mechanism. In Polynucleobacter asymbioticus (strain DSM 18221 / CIP 109841 / QLW-P1DMWA-1) (Polynucleobacter necessarius subsp. asymbioticus), this protein is Serine hydroxymethyltransferase.